Consider the following 507-residue polypeptide: MAAELVEAKNMVMSFRVSDLQMLLGFVGRSKSGLKHELVTRALQLVQFDCSPELFKKIKELYETRYAKKSAEPGPQAPRPLDPLALHSMPRTPLSGPTVDYPVLYGKYLNGLGRLPTKTLKPEVRLVKLPFFNMLDELLKPTELVPQSAEKLQESPCIFALTPRQVEMIRNSRELQPGVKAVQVVLRICYSDTSCPQEDQYPPNIAVKVNHSYCSVPGYYPSNKPGVEPKRPCRPINLTHLMYLSSATNRITVTWGNYGKSYSVALYLVRQLTSSDLLQRLKTIGVKHPELCKALVKEKLRLDPDSEIATTGVRVSLICPLVKMRLSVPCRAETCAHLQCFDAVFYLQMNEKKPTWMCPVCDKPAAYDQLIIDGLLSKILSECEGADEIEFLAEGSWRPIRAEKEPSCSPQGPILVLGTSDANGLAPASSTPGIGSGLSGPGSAGSGAGAAGSLENGKTGADVVDLTLDSSSSSEDEDEDEDDDEDEDEGPRPKRRCPFQKGLVPAC.

Ala2 carries the N-acetylalanine modification. Lys9 participates in a covalent cross-link: Glycyl lysine isopeptide (Lys-Gly) (interchain with G-Cter in SUMO2). The SAP domain occupies 12 to 46 (VMSFRVSDLQMLLGFVGRSKSGLKHELVTRALQLV). The LXXLL motif signature appears at 20 to 24 (LQMLL). Residue Lys35 forms a Glycyl lysine isopeptide (Lys-Gly) (interchain with G-Cter in SUMO); alternate linkage. Lys35 is covalently cross-linked (Glycyl lysine isopeptide (Lys-Gly) (interchain with G-Cter in SUMO2); alternate). Residues Lys56, Lys59, Lys68, and Lys69 each participate in a glycyl lysine isopeptide (Lys-Gly) (interchain with G-Cter in SUMO2) cross-link. Lys107 is subject to N6-acetyllysine. The 161-residue stretch at 112–272 (LGRLPTKTLK…SVALYLVRQL (161 aa)) folds into the PINIT domain. A Glycyl lysine isopeptide (Lys-Gly) (interchain with G-Cter in SUMO2) cross-link involves residue Lys118. Residue Lys128 forms a Glycyl lysine isopeptide (Lys-Gly) (interchain with G-Cter in SUMO) linkage. An SP-RING-type zinc finger spans residues 304–385 (PDSEIATTGV…LSKILSECEG (82 aa)). Zn(2+) is bound by residues Cys335, His337, Cys358, and Cys361. Positions 426-507 (APASSTPGIG…PFQKGLVPAC (82 aa)) are disordered. Gly residues predominate over residues 434 to 450 (IGSGLSGPGSAGSGAGA). Residues 474–489 (SEDEDEDEDDDEDEDE) show a composition bias toward acidic residues.

This sequence belongs to the PIAS family. Interacts with AR, GATA2, LEF1, TP53 and STAT1 (IFNG-induced). Interacts with TICAM1. Interacts with MTA1. Interacts with PRDM1/Blimp-1. Interacts with TRIM32 upon treatment with UVB and TNF-alpha. In terms of assembly, (Microbial infection) Interacts ewith Moloney murine leukemia virus Capsid protein p30. In terms of processing, sumoylated. Lys-35 is the main site of sumoylation. Sumoylation is required for TCF4 sumoylation and transcriptional activation. Represses LEF1 transcriptional activity. SUMO1 is the preferred conjugate. Ubiquitinated by TRIM32 upon treatment with UVB and TNF-alpha. In terms of tissue distribution, widely expressed, with highest levels in testis. Also expressed in vascular endothelial cells, in primary keratinocytes and in the CNS, including cortex, olfactory bulb, spinal cord, thalamus and trigeminal ganglion. Low expression, if any, in liver and lung.

The protein localises to the nucleus. Its subcellular location is the PML body. The enzyme catalyses S-ubiquitinyl-[E2 ubiquitin-conjugating enzyme]-L-cysteine + [acceptor protein]-L-lysine = [E2 ubiquitin-conjugating enzyme]-L-cysteine + N(6)-ubiquitinyl-[acceptor protein]-L-lysine.. Its pathway is protein modification; protein sumoylation. In terms of biological role, functions as an E3-type small ubiquitin-like modifier (SUMO) ligase, stabilizing the interaction between UBE2I and the substrate, and as a SUMO-tethering factor. Mediates sumoylation of ALKBH5, AXIN1, CEBPA, KLF8, GATA2, PARK7, HERC2, MYB, TCF4 and RNF168. Plays a crucial role as a transcriptional coregulation in various cellular pathways, including the STAT pathway, the p53/TP53 pathway, the Wnt pathway and the steroid hormone signaling pathway. Involved in gene silencing. In Wnt signaling, represses LEF1 and enhances TCF4 transcriptional activities through promoting their sumoylations. Enhances the sumoylation of MTA1 and may participate in its paralog-selective sumoylation. Binds to AT-rich DNA sequences, known as matrix or scaffold attachment regions (MARs/SARs). Catalyzes conjugation of SUMO2 to KAT5 in response to DNA damage, facilitating repair of DNA double-strand breaks (DSBs) via homologous recombination (HR). Mediates sumoylation of PARP1 in response to PARP1 trapping to chromatin. Mediates sumoylation of KLF8, repressiing KLF8 transcriptional activity and cell cycle progression into G(1) phase. Sumoylates ALKBH5 downstream of MAPK8/JNK1 and MAPK9/JNK2 in response to reactive oxygen species (ROS), inhibiting ALKBH5 RNA demethylase activity. This is E3 SUMO-protein ligase PIAS4 (Pias4) from Mus musculus (Mouse).